Reading from the N-terminus, the 212-residue chain is ATP phosphoribosyltransferase (212 aa).

It belongs to the ATP phosphoribosyltransferase family. Short subfamily. As to quaternary structure, heteromultimer composed of HisG and HisZ subunits.

Its subcellular location is the cytoplasm. The enzyme catalyses 1-(5-phospho-beta-D-ribosyl)-ATP + diphosphate = 5-phospho-alpha-D-ribose 1-diphosphate + ATP. It participates in amino-acid biosynthesis; L-histidine biosynthesis; L-histidine from 5-phospho-alpha-D-ribose 1-diphosphate: step 1/9. Catalyzes the condensation of ATP and 5-phosphoribose 1-diphosphate to form N'-(5'-phosphoribosyl)-ATP (PR-ATP). Has a crucial role in the pathway because the rate of histidine biosynthesis seems to be controlled primarily by regulation of HisG enzymatic activity. This is ATP phosphoribosyltransferase from Prochlorococcus marinus (strain MIT 9301).